The following is a 90-amino-acid chain: Small ribosomal subunit protein uS15 (90 aa).

The protein belongs to the universal ribosomal protein uS15 family. As to quaternary structure, part of the 30S ribosomal subunit. Forms a bridge to the 50S subunit in the 70S ribosome, contacting the 23S rRNA.

Its function is as follows. One of the primary rRNA binding proteins, it binds directly to 16S rRNA where it helps nucleate assembly of the platform of the 30S subunit by binding and bridging several RNA helices of the 16S rRNA. In terms of biological role, forms an intersubunit bridge (bridge B4) with the 23S rRNA of the 50S subunit in the ribosome. The protein is Small ribosomal subunit protein uS15 of Herpetosiphon aurantiacus (strain ATCC 23779 / DSM 785 / 114-95).